Reading from the N-terminus, the 421-residue chain is Prenyltransferase asqH2 (421 aa).

The interval 1–28 is disordered; that stretch reads MDRNSFTAYGPATGAITESGEQENDHTK. Residue glutamate 105 coordinates L-tryptophan. Substrate is bound by residues arginine 119, arginine 272, lysine 274, tyrosine 276, and tyrosine 341.

It belongs to the tryptophan dimethylallyltransferase family.

The catalysed reaction is yaequinolone E + dimethylallyl diphosphate + H2O = [(1'E)-3'-hydroxy-3',7'-dimethylocta-1',6'-dien-1'-yl]-quinolinone B + diphosphate. Its pathway is secondary metabolite biosynthesis. The protein operates within alkaloid biosynthesis. It functions in the pathway mycotoxin biosynthesis. Its function is as follows. Prenyltransferase; part of the gene cluster that mediates the biosynthesis of the aspoquinolone mycotoxins. Within the pathway, the prenyltransferase asqH2 performs the second alkylation with DMAPP at delta(3') double bond to yield a carbenium ion intermediate, which can be attacked by H(2)O to yield a styrenyl quinolone containing a C3'-hydroxyprenyl chain. The first step of the pathway is catalyzed by the nonribosomal peptide synthetase asqK that condenses anthranilic acid and O-methyl-L-tyrosine to produce 4'-methoxycyclopeptin. 4'-methoxycyclopeptin is then converted to 4'-methoxydehydrocyclopeptin by the ketoglutarate-dependent dioxygenase asqJ. AsqJ also converts its first product 4'-methoxydehydrocyclopeptin to 4'-methoxycyclopenin. The following conversion of 4'-methoxycyclopenin into 4'-methoxyviridicatin is catalyzed by the cyclopenase asqI. 4'-methoxyviridicatin is the precursor of quinolone natural products, and is further converted to quinolinone B. The prenyltransferase asqH1 then catalyzes the canonical Friedel-Crafts alkylation of quinolinone B with dimethylallyl cation to yield dimethylallyl quinolone, which is subjected to FAD-dependent dehydrogenation by the FAD-linked oxidoreductase asqF to yield conjugated aryl diene. The delta(3') double bond then serves as the site of the second alkylation with DMAPP catalyzed by the prenyltransferase asqH2 to yield a carbenium ion intermediate, which can be attacked by H(2)O to yield a styrenyl quinolone containing a C3'-hydroxyprenyl chain. The FAD-dependent monooxygenase asqG performs epoxidation of the terminal C7'-C8' olefin. Finally, after dehydratation of the epoxide at C3 by asqC, the quinolone epoxide rearrangement protein asqO catalyzes an enzymatic 3-exo-tet cyclization to yield the cyclopropyl-THF ring system in aspoquinolone. The chain is Prenyltransferase asqH2 from Emericella nidulans (strain FGSC A4 / ATCC 38163 / CBS 112.46 / NRRL 194 / M139) (Aspergillus nidulans).